A 69-amino-acid polypeptide reads, in one-letter code: Probable molybdenum-pterin-binding protein (69 aa).

The Mop domain occupies 2–68; it reads KISARNQLKG…IKATSVMVGV (67 aa).

To C.pasteurianum MOP proteins.

Its function is as follows. Binds one mole of molybdenum per mole of protein and contains a pterin. The protein is Probable molybdenum-pterin-binding protein of Haemophilus influenzae (strain ATCC 51907 / DSM 11121 / KW20 / Rd).